Reading from the N-terminus, the 309-residue chain is Wnt inhibitor of Dorsal protein (309 aa).

Residues 1 to 16 (MIFAITFFMGITSTLA) form the signal peptide. Disulfide bonds link C51–C62, C102–C110, C112–C121, C162–C179, C164–C174, C232–C269, C248–C262, C266–C308, C284–C299, and C286–C296.

This sequence belongs to the Wnt family.

The protein localises to the secreted. The protein resides in the extracellular space. It localises to the extracellular matrix. In terms of biological role, binds as a ligand to a family of frizzled seven-transmembrane receptors and acts through a cascade of genes on the nucleus. This is Wnt inhibitor of Dorsal protein (wntD) from Drosophila melanogaster (Fruit fly).